Reading from the N-terminus, the 66-residue chain is Large ribosomal subunit protein bL35 (66 aa).

This sequence belongs to the bacterial ribosomal protein bL35 family.

This is Large ribosomal subunit protein bL35 from Methylobacterium nodulans (strain LMG 21967 / CNCM I-2342 / ORS 2060).